A 365-amino-acid chain; its full sequence is Chorismate synthase (365 aa).

A compositionally biased stretch (basic and acidic residues) spans 41-51; the sequence is IQKELDRRRPG. Residues 41-62 are disordered; that stretch reads IQKELDRRRPGQSEVSTPRSEA. Residue Arg48 participates in NADP(+) binding. Residues 125 to 127, Gly285, 300 to 304, and Arg327 contribute to the FMN site; these read RSS and KPTPS.

Belongs to the chorismate synthase family. FMNH2 serves as cofactor.

The catalysed reaction is 5-O-(1-carboxyvinyl)-3-phosphoshikimate = chorismate + phosphate. It participates in metabolic intermediate biosynthesis; chorismate biosynthesis; chorismate from D-erythrose 4-phosphate and phosphoenolpyruvate: step 7/7. Catalyzes the anti-1,4-elimination of the C-3 phosphate and the C-6 proR hydrogen from 5-enolpyruvylshikimate-3-phosphate (EPSP) to yield chorismate, which is the branch point compound that serves as the starting substrate for the three terminal pathways of aromatic amino acid biosynthesis. This reaction introduces a second double bond into the aromatic ring system. This chain is Chorismate synthase, found in Methanosarcina acetivorans (strain ATCC 35395 / DSM 2834 / JCM 12185 / C2A).